Reading from the N-terminus, the 239-residue chain is Ribosomal RNA small subunit methyltransferase G (239 aa).

Residues G78, F83, 129 to 130 (AE), and R148 contribute to the S-adenosyl-L-methionine site.

This sequence belongs to the methyltransferase superfamily. RNA methyltransferase RsmG family.

It is found in the cytoplasm. In terms of biological role, specifically methylates the N7 position of a guanine in 16S rRNA. This is Ribosomal RNA small subunit methyltransferase G from Clostridium botulinum (strain Eklund 17B / Type B).